A 228-amino-acid polypeptide reads, in one-letter code: L-ribulose-5-phosphate 4-epimerase UlaF (228 aa).

Residues G26–N27, S43–G44, and S72–S73 contribute to the substrate site. D74, H93, and H95 together coordinate Zn(2+). The active-site Proton donor/acceptor is the D118. H167 contacts Zn(2+). Y225 functions as the Proton donor/acceptor in the catalytic mechanism.

The protein belongs to the aldolase class II family. AraD/FucA subfamily. Zn(2+) is required as a cofactor.

The enzyme catalyses L-ribulose 5-phosphate = D-xylulose 5-phosphate. The protein operates within cofactor degradation; L-ascorbate degradation; D-xylulose 5-phosphate from L-ascorbate: step 4/4. Functionally, catalyzes the isomerization of L-ribulose 5-phosphate to D-xylulose 5-phosphate. Is involved in the anaerobic L-ascorbate utilization. This Escherichia coli O8 (strain IAI1) protein is L-ribulose-5-phosphate 4-epimerase UlaF.